The primary structure comprises 315 residues: Cytosolic Fe-S cluster assembly factor nubp1-A (315 aa).

The disordered stretch occupies residues 1–23 (MADIPDNAPQHCPGTDSTEAGKS). [4Fe-4S] cluster is bound by residues cysteine 12, cysteine 26, cysteine 29, and cysteine 35. 66–73 (GKGGVGKS) serves as a coordination point for ATP. Positions 239 and 242 each coordinate [4Fe-4S] cluster.

This sequence belongs to the Mrp/NBP35 ATP-binding proteins family. NUBP1/NBP35 subfamily. As to quaternary structure, heterotetramer of 2 nubp1 and 2 nubp2 chains. The cofactor is [4Fe-4S] cluster.

The protein localises to the cytoplasm. Component of the cytosolic iron-sulfur (Fe/S) protein assembly (CIA) machinery. Required for maturation of extramitochondrial Fe-S proteins. The nubp1-nubp2 heterotetramer forms a Fe-S scaffold complex, mediating the de novo assembly of an Fe-S cluster and its transfer to target apoproteins. The protein is Cytosolic Fe-S cluster assembly factor nubp1-A (nubp1-A) of Xenopus laevis (African clawed frog).